The sequence spans 487 residues: Glutamyl-tRNA(Gln) amidotransferase subunit A (487 aa).

Catalysis depends on charge relay system residues lysine 80 and serine 155. Catalysis depends on serine 179, which acts as the Acyl-ester intermediate.

The protein belongs to the amidase family. GatA subfamily. In terms of assembly, heterotrimer of A, B and C subunits.

It catalyses the reaction L-glutamyl-tRNA(Gln) + L-glutamine + ATP + H2O = L-glutaminyl-tRNA(Gln) + L-glutamate + ADP + phosphate + H(+). Functionally, allows the formation of correctly charged Gln-tRNA(Gln) through the transamidation of misacylated Glu-tRNA(Gln) in organisms which lack glutaminyl-tRNA synthetase. The reaction takes place in the presence of glutamine and ATP through an activated gamma-phospho-Glu-tRNA(Gln). The chain is Glutamyl-tRNA(Gln) amidotransferase subunit A from Chloroflexus aurantiacus (strain ATCC 29366 / DSM 635 / J-10-fl).